Here is a 404-residue protein sequence, read N- to C-terminus: Keratin, type I cuticular Ha3-I (404 aa).

Positions 1-56 (MSYSCGLPNLSCRTSCSSRPCVPPSCHGCTLPGACNIPANVSNCNWFCEGSFNGSE) are head. The IF rod domain occupies 56–367 (EKETMQFLND…SLLESEDCKL (312 aa)). Residues 57-91 (KETMQFLNDRLASYLEKVRQLERDNAELENLIRER) form a coil 1A region. The interval 92-102 (SQQQEPLVCAS) is linker 1. The interval 103-203 (YQSYFKTIEE…HEQEVNTLRC (101 aa)) is coil 1B. Positions 204 to 219 (QLGGRLNVEVDAAPAV) are linker 12. The coil 2 stretch occupies residues 220-363 (DLNQVLNETR…NTYRSLLESE (144 aa)). The tail stretch occupies residues 364-404 (DCKLPSNPCAITNACDKSTGPCISNPCGPRARCGPCNTFGY).

The protein belongs to the intermediate filament family.

This is Keratin, type I cuticular Ha3-I from Pan troglodytes (Chimpanzee).